Reading from the N-terminus, the 120-residue chain is Large ribosomal subunit protein eL34z (120 aa).

The disordered stretch occupies residues 31 to 51 (VYQTTKKRASGPKCPVTGKRI).

Belongs to the eukaryotic ribosomal protein eL34 family.

The polypeptide is Large ribosomal subunit protein eL34z (RPL34A) (Arabidopsis thaliana (Mouse-ear cress)).